Here is a 338-residue protein sequence, read N- to C-terminus: Glycerol-3-phosphate dehydrogenase [NAD(P)+] (338 aa).

NADPH is bound by residues Ser13, Trp14, and Lys108. Residues Lys108, Gly139, and Ser141 each coordinate sn-glycerol 3-phosphate. Residue Ala143 coordinates NADPH. The sn-glycerol 3-phosphate site is built by Lys194, Asp247, Ser257, Arg258, and Asn259. The Proton acceptor role is filled by Lys194. Arg258 contacts NADPH. Residues Val282 and Glu284 each contribute to the NADPH site.

The protein belongs to the NAD-dependent glycerol-3-phosphate dehydrogenase family.

The protein resides in the cytoplasm. The enzyme catalyses sn-glycerol 3-phosphate + NAD(+) = dihydroxyacetone phosphate + NADH + H(+). It catalyses the reaction sn-glycerol 3-phosphate + NADP(+) = dihydroxyacetone phosphate + NADPH + H(+). It participates in membrane lipid metabolism; glycerophospholipid metabolism. In terms of biological role, catalyzes the reduction of the glycolytic intermediate dihydroxyacetone phosphate (DHAP) to sn-glycerol 3-phosphate (G3P), the key precursor for phospholipid synthesis. The sequence is that of Glycerol-3-phosphate dehydrogenase [NAD(P)+] from Streptococcus pyogenes serotype M12 (strain MGAS9429).